The chain runs to 394 residues: Elongation factor Tu (394 aa).

The tr-type G domain maps to 10–204; sequence KPHVNVGTIG…YLDSYIPEPE (195 aa). The interval 19 to 26 is G1; the sequence is GHVDHGKT. A GTP-binding site is contributed by 19–26; the sequence is GHVDHGKT. Thr26 contacts Mg(2+). The tract at residues 60–64 is G2; it reads GITIN. The tract at residues 81–84 is G3; that stretch reads DCPG. Residues 81 to 85 and 136 to 139 contribute to the GTP site; these read DCPGH and NKCD. The interval 136–139 is G4; it reads NKCD. Residues 174-176 are G5; that stretch reads SAL.

Belongs to the TRAFAC class translation factor GTPase superfamily. Classic translation factor GTPase family. EF-Tu/EF-1A subfamily. Monomer.

It is found in the cytoplasm. It carries out the reaction GTP + H2O = GDP + phosphate + H(+). In terms of biological role, GTP hydrolase that promotes the GTP-dependent binding of aminoacyl-tRNA to the A-site of ribosomes during protein biosynthesis. In Pectobacterium atrosepticum (strain SCRI 1043 / ATCC BAA-672) (Erwinia carotovora subsp. atroseptica), this protein is Elongation factor Tu.